The sequence spans 475 residues: Siroheme synthase (475 aa).

The tract at residues 1–204 (MDYLPVFLNI…GRDQAAQDYL (204 aa)) is precorrin-2 dehydrogenase /sirohydrochlorin ferrochelatase. NAD(+) is bound by residues 22–23 (EI) and 43–44 (PA). Serine 129 is subject to Phosphoserine. Residues 218–475 (GEVYLVGAGP…MGTSSGPGYP (258 aa)) are uroporphyrinogen-III C-methyltransferase. Proline 227 provides a ligand contact to S-adenosyl-L-methionine. Aspartate 250 functions as the Proton acceptor in the catalytic mechanism. The active-site Proton donor is lysine 272. Residues 303-305 (GGD), isoleucine 308, 333-334 (TA), methionine 385, and glycine 414 contribute to the S-adenosyl-L-methionine site.

This sequence in the N-terminal section; belongs to the precorrin-2 dehydrogenase / sirohydrochlorin ferrochelatase family. The protein in the C-terminal section; belongs to the precorrin methyltransferase family.

It carries out the reaction uroporphyrinogen III + 2 S-adenosyl-L-methionine = precorrin-2 + 2 S-adenosyl-L-homocysteine + H(+). The enzyme catalyses precorrin-2 + NAD(+) = sirohydrochlorin + NADH + 2 H(+). The catalysed reaction is siroheme + 2 H(+) = sirohydrochlorin + Fe(2+). The protein operates within cofactor biosynthesis; adenosylcobalamin biosynthesis; precorrin-2 from uroporphyrinogen III: step 1/1. It functions in the pathway cofactor biosynthesis; adenosylcobalamin biosynthesis; sirohydrochlorin from precorrin-2: step 1/1. Its pathway is porphyrin-containing compound metabolism; siroheme biosynthesis; precorrin-2 from uroporphyrinogen III: step 1/1. It participates in porphyrin-containing compound metabolism; siroheme biosynthesis; siroheme from sirohydrochlorin: step 1/1. The protein operates within porphyrin-containing compound metabolism; siroheme biosynthesis; sirohydrochlorin from precorrin-2: step 1/1. Its function is as follows. Multifunctional enzyme that catalyzes the SAM-dependent methylations of uroporphyrinogen III at position C-2 and C-7 to form precorrin-2 via precorrin-1. Then it catalyzes the NAD-dependent ring dehydrogenation of precorrin-2 to yield sirohydrochlorin. Finally, it catalyzes the ferrochelation of sirohydrochlorin to yield siroheme. The sequence is that of Siroheme synthase from Nitrosomonas europaea (strain ATCC 19718 / CIP 103999 / KCTC 2705 / NBRC 14298).